An 851-amino-acid polypeptide reads, in one-letter code: MIQQKVLFISLVAVTLGLGLGLGLKESVQPQVSCRYRCNETFSKMASGCSCDDKCTERQACCSDYEDTCVLPTQSWSCSKLRCGEKRIANVLCSCSDDCLEKKDCCTDYKSICKGETSWLKDKCASSGATQCPAGFEQSPLILFSMDGFRAGYLENWDSLMPNINKLKTCGTHAKYMRAVYPTKTFVNHYTIATGLYPESHGIIDNNIYDVNLNLNFSLSSSTARNPAWWGGQPIWHTATYQGLKAATYFWPGSEVKINGSYPTIFKNYNKSIPFEARVTEVLKWLDLPKAKRPDFLTLYIEEPDTTGHKYGPVSGEIIKALQMADRTLGMLMEGLKQRNLHNCVNLILLADHGMEEISCDRLEYMANYFNNVDFFMYEGPAPRIRSKNVPKDFYTFDSEGIVKNLTCRKPKQYFKAYLSKDLPKRLHYANNIRIDKVNLMVDQQWMAVRDKKFTRCKGGTHGYDNEFKSMQAIFLAHGPGFNEKNEVTSFENIEVYNLMCDLLKLKPAPNNGTHGSLNHLLKNPFYTPSPAKEQSSPLSCPFGPVPSPDVSGCKCSSITELEKVNQRLNLNNQAKTESEAHNLPYGRPQVLQNHSKYCLLHQAKYISAYSQDILMPLWSSYTIYRSTSTSVPPSASDCLRLDVRIPAAQSQTCSNYQPDLTITPGFLYPPNFNSSNFEQYDALITSNIVPMFKGFTRLWNYFHTTLIPKYARERNGLNVISGPIFDYNYDGHFDSYDTIKQHVNNTKIPIPTHYFVVLTSCENQINTPLNCLGPLKVLSFILPHRPDNSESCADTSPENLWVEERIQIHTARVRDVELLTGLNFYSGLKQPLPETLQLKTFLPIFVNPVN.

Positions 1–23 are cleaved as a signal peptide; it reads MIQQKVLFISLVAVTLGLGLGLG. SMB domains are found at residues 30-73 and 74-118; these read PQVS…VLPT and QSWS…GETS. 16 disulfides stabilise this stretch: Cys-34–Cys-38, Cys-34–Cys-51, Cys-38–Cys-69, Cys-49–Cys-51, Cys-49–Cys-62, Cys-55–Cys-61, Cys-62–Cys-69, Cys-78–Cys-83, Cys-78–Cys-95, Cys-83–Cys-113, Cys-93–Cys-95, Cys-93–Cys-106, Cys-99–Cys-105, Cys-106–Cys-113, Cys-124–Cys-170, and Cys-132–Cys-344. Asn-39 carries an N-linked (GlcNAc...) asparagine glycan. Positions 58–60 match the Cell attachment site motif; it reads RQA. A divalent metal cation contacts are provided by Asp-147 and Thr-185. Catalysis depends on Thr-185, which acts as the AMP-threonine intermediate. Residues Asn-216, Asn-259, and Asn-270 are each glycosylated (N-linked (GlcNAc...) asparagine). An AMP-binding site is contributed by Lys-271. 4 residues coordinate a divalent metal cation: Asp-305, His-309, Asp-352, and His-353. Residue His-309 coordinates AMP. Intrachain disulfides connect Cys-360-Cys-457, Cys-408-Cys-793, Cys-541-Cys-599, Cys-554-Cys-654, Cys-556-Cys-639, and Cys-762-Cys-772. N-linked (GlcNAc...) asparagine glycosylation is present at Asn-405. Residue His-462 participates in a divalent metal cation binding. N-linked (GlcNAc...) asparagine glycans are attached at residues Asn-512, Asn-594, Asn-674, and Asn-745.

It belongs to the nucleotide pyrophosphatase/phosphodiesterase family. As to quaternary structure, monomer cleaved in two subunits; disulfide-linked. Is synthesized as a single-chain protein and is subsequently cleaved to form a two-subunit protein held together with disulfide bonds. Requires a divalent metal cation as cofactor. In terms of tissue distribution, expressed by venom gland.

The protein resides in the secreted. The enzyme catalyses ADP + H2O = AMP + phosphate + H(+). Its function is as follows. Hydrolyzes ADP with high activity. Shows weak or no activity on 5'-AMP, 5'-GMP, 3'-AMP, ATP, cAMP, and cGMP. Is devoid of monophosphatase and proteinase activities. Dose-dependently inhibits platelet aggregation induced by ADP and collagen. The protein is Venom phosphodiesterase 1 of Crotalus adamanteus (Eastern diamondback rattlesnake).